We begin with the raw amino-acid sequence, 443 residues long: MTTHNICALITEFPLVKRLIDLEEVVWFNPNITTLEEGLPYVGLGAANIKDASERLKRFAPYLMKAFPETAASNGIIESNVVEIDKMKSCLEAQYGTQILGRLMLKKDSHLPISGSIKARGGIYEVLTHAERLAIEAGLLNESDDYSKLFSEEFRQFFQQYSIAVSSTGNLGMSIGIMSAKLGFSVSVHMSSDAREWKKNKLRSHGVNVVEYEQDYGVAVEQGRKEAEKDPTCFFIDDENSQTLFLGYSVAGERLKQQFDDMGIIVDAEHPLFVYLPCGVGGGPGGVAFGLKMAFGDHVHCIFAEPTHSPCMLLGVHTGLHDDIAVQDLGIDNITAADGLAVGRASGFVGRAMERLLDGYYTITDERMYHHLGELSEQEDIRLEPSALAGMMGAVHVSQDQAYQARMQFSEDKMNNAIHLVWATGGGMVPEAEMSAYLAKSGR.

Residue Lys-118 is modified to N6-(pyridoxal phosphate)lysine.

The protein belongs to the serine/threonine dehydratase family. DsdA subfamily. Requires pyridoxal 5'-phosphate as cofactor.

It carries out the reaction D-serine = pyruvate + NH4(+). This is Probable D-serine dehydratase from Vibrio campbellii (strain ATCC BAA-1116).